Consider the following 266-residue polypeptide: MGYLKRLVLYIVIMVMSVFIIGCDKSSDTAEKSKEDSKETQIKKSFAKTLDMYSIKNLEELYDKEGYRDGEFEKGDKGMWTIYTDFAKSNKPGELSNEGMVLYLDRNTRTAKGYYFVRTFYRKDKLPDRKNYKVEMKNNKIILLDKVEDKKLKQKIENFKFFSQYANLKELKNYSNGDVSINENVPSYDVKYKMSNKDENVKQLRSRYNIPTDKSPVLKMHIDGNLKGSSVGDRKLEIDFSKRENSHLSVIDSLDYQPAKTNKDDE.

An N-terminal signal peptide occupies residues 1–22; sequence MGYLKRLVLYIVIMVMSVFIIG. The N-palmitoyl cysteine moiety is linked to residue Cys-23. Cys-23 is lipidated: S-diacylglycerol cysteine.

This sequence belongs to the staphylococcal tandem lipoprotein family.

The protein localises to the cell membrane. This is an uncharacterized protein from Staphylococcus aureus (strain USA300).